A 261-amino-acid polypeptide reads, in one-letter code: uncharacterized protein (261 aa).

Residues 7 to 122 (TAVLADDEPL…RLASCCEKLQ (116 aa)) enclose the Response regulatory domain. Aspartate 54 is subject to 4-aspartylphosphate. Residues 157–261 (LKASKGEEIH…RALQHLFKVS (105 aa)) enclose the HTH LytTR-type domain.

This is an uncharacterized protein from Vibrio cholerae serotype O1 (strain ATCC 39315 / El Tor Inaba N16961).